We begin with the raw amino-acid sequence, 1432 residues long: MGARASILSGGKLDDWEKIRLRPGGKKQYRIKHLVWASRELDRFALNPGLLESAKGCQQILVQLQPALQTGTEEIKSLYNTVATLYCVHQRIEIKDTKEALDKIEEIQNKNKQQTQKAETDKKDNSQVSQNYPIVQNLQGQPVHQALSPRTLNAWVKVIEEKAFSPEVIPMFSALSEGATPQDLNTMLNTIGGHQAAMQMLKDTINEEAAEWDRVHPVHAGPVAPGQVREPRGSDIAGTTSNLQEQIGWMTGNPPIPVGEIYKRWIILGLNKIVRMYSPVSILDIRQGPKEPFRDYVDRFFKALRAEQATQDVKNWMTDTLLVQNANPDCKTILKALGSGATLEEMMTACQGVGGPGHKARVLAEAMSQVTNTNIMMQRGNFRDHKRIVKCFNCGKQGHIAKNCRAPRKKGCWKCGKEGHQMKDCTERQANFFREDLAFQQREAREFSPEQTRANSPTSREPRVRRGDPLPETGAEGQGTVSSNFPQITLWQRPLVTIRIGGQLREALLDTGADDTVLEEIDLPGKWKPKMIGGIGGFIKVRQYNEVPIEIEGKKAIGTVLIGPTPVNIIGRNMLTQLGCTLNFPISPIETVPVKLKPGMDGPKIKQWPLTEEKIKALTQICAELEEEGKISRIGPENPYNTPVFAIKKKDSTKWRKLVDFRELNKRTQDFWEVQLGIPHPAGLKKKKSVTVLDVGDAYFSVPLYEDFRKYTAFTIPSINNETPGIRYQYNVLPQGWKGSPAIFQCSMTKILKPFRERNPEIVIYQYMDDLYVGSDLEIEQHRRKIKELREHLLKWGFYTPDKKHQKEPPFLWMGYELHPDKWTVQPIQLPEKEDWTVNDIQKLVGKLNWASQIYPGIKIKELCKLIRGAKALTDIVPLTREAELELAENKEILKEPVHGVYYDPARELIAEVQKQGLDQWTYQIYQEPFKNLKTGKYAKRRSAHTNDVKQLSQVVQKIALEAIVIWGKTPKFRLPIQKETWETWWTDYWQATWIPEWEFVNTPPLVKLWYQLEKEPIMGAETFYVDGASNRETKVGKAGYVTDKGRQKVITLTDTTNQKTELQAIYLALQDSGIEVNIVTDSQYALGIIQAQPDKSESELVNQIIEELIKKEKVYLSWVPAHKGIGGNEQVDKLVSSGIRKVLFLDGIDKAQEEHEKYHSNWRAMASDFNLPPVVAKEIVASCDKCQLKGEAMHGQVDCSPGIWQLDCTHLEGKVILVAVHVASGYIEAEVIPAETGQEAAFFILKLAGGWPVKAIHTDNGSNFTSGAVKAACWWADIKQEFGIPYNPQSQGVVESMNKELKKIIGQVREQAEHLKTAVQMAVFIHNFKRKGGIGGYSAGERIIDIIATDIQTKELQKQITKIQNFRVYYRDSRDPIWKGPAKLLWKGEGAVVIQDNSEIKVVPRRKAKIIRDYGKQMAGDDCVAGRQDED.

The N-myristoyl glycine; by host moiety is linked to residue glycine 2. The segment at 7–31 (ILSGGKLDDWEKIRLRPGGKKQYRI) is interaction with Gp41. An interaction with host CALM1 region spans residues 8–43 (LSGGKLDDWEKIRLRPGGKKQYRIKHLVWASRELDR). The interval 12 to 19 (KLDDWEKI) is interaction with host AP3D1. Residues 14-33 (DDWEKIRLRPGGKKQYRIKH) form an interaction with membrane phosphatidylinositol 4,5-bisphosphate and RNA region. Residues 16–22 (WEKIRLR) carry the Nuclear export signal motif. A Nuclear localization signal motif is present at residues 26-32 (KKQYRIK). Residues 73 to 77 (EEIKS) form an interaction with membrane phosphatidylinositol 4,5-bisphosphate region. The residue at position 132 (tyrosine 132) is a Phosphotyrosine; by host. An interaction with human PPIA/CYPA and NUP153 region spans residues 189–227 (NTIGGHQAAMQMLKDTINEEAAEWDRVHPVHAGPVAPGQ). The segment at 277–363 (YSPVSILDIR…GGPGHKARVL (87 aa)) is dimerization/Multimerization of capsid protein p24. CCHC-type zinc fingers lie at residues 389-406 (VKCF…NCRA) and 410-427 (KGCW…DCTE). The segment at 443 to 482 (EAREFSPEQTRANSPTSREPRVRRGDPLPETGAEGQGTVS) is disordered. The segment covering 449 to 459 (PEQTRANSPTS) has biased composition (polar residues). The segment covering 460-469 (REPRVRRGDP) has biased composition (basic and acidic residues). A dimerization of protease region spans residues 486 to 490 (PQITL). In terms of domain architecture, Peptidase A2 spans 505 to 574 (REALLDTGAD…TPVNIIGRNM (70 aa)). The active-site For protease activity; shared with dimeric partner is the aspartate 510. Dimerization of protease stretches follow at residues 534–540 (GIGGFIK) and 573–585 (NMLT…LNFP). A Reverse transcriptase domain is found at 628-818 (EGKISRIGPE…PPFLWMGYEL (191 aa)). 3 residues coordinate Mg(2+): aspartate 694, aspartate 769, and aspartate 770. Residues 811–819 (FLWMGYELH) are RT 'primer grip'. Residues 982-998 (WETWWTDYWQATWIPEW) carry the Tryptophan repeat motif motif. The RNase H type-1 domain maps to 1018–1141 (IMGAETFYVD…VDKLVSSGIR (124 aa)). Positions 1027, 1062, 1082, and 1133 each coordinate Mg(2+). Residues 1147 to 1188 (DGIDKAQEEHEKYHSNWRAMASDFNLPPVVAKEIVASCDKCQ) form an Integrase-type zinc finger. Residues histidine 1156, histidine 1160, cysteine 1184, and cysteine 1187 each coordinate Zn(2+). Residues 1198–1348 (VDCSPGIWQL…SAGERIIDII (151 aa)) form the Integrase catalytic domain. The Mg(2+) site is built by aspartate 1208, aspartate 1260, and glutamate 1296. The segment at residues 1367-1414 (FRVYYRDSRDPIWKGPAKLLWKGEGAVVIQDNSEIKVVPRRKAKIIRD) is a DNA-binding region (integrase-type).

As to quaternary structure, homotrimer; further assembles as hexamers of trimers. Interacts with gp41 (via C-terminus). Interacts with host CALM1; this interaction induces a conformational change in the Matrix protein, triggering exposure of the myristate group. Interacts with host AP3D1; this interaction allows the polyprotein trafficking to multivesicular bodies during virus assembly. Part of the pre-integration complex (PIC) which is composed of viral genome, matrix protein, Vpr and integrase. Homodimer; the homodimer further multimerizes as homohexamers or homopentamers. Interacts with human PPIA/CYPA; This interaction stabilizes the capsid. Interacts with human NUP153. Interacts with host PDZD8; this interaction stabilizes the capsid. Interacts with monkey TRIM5; this interaction destabilizes the capsid. In terms of assembly, homodimer, whose active site consists of two apposed aspartic acid residues. As to quaternary structure, heterodimer of p66 RT and p51 RT (RT p66/p51). Heterodimerization of RT is essential for DNA polymerase activity. The overall folding of the subdomains is similar in p66 RT and p51 RT but the spatial arrangements of the subdomains are dramatically different. Homotetramer; may further associate as a homohexadecamer. Part of the pre-integration complex (PIC) which is composed of viral genome, matrix protein, Vpr and integrase. Interacts with human SMARCB1/INI1 and human PSIP1/LEDGF isoform 1. Interacts with human KPNA3; this interaction might play a role in nuclear import of the pre-integration complex. Interacts with human NUP153; this interaction might play a role in nuclear import of the pre-integration complex. It depends on Mg(2+) as a cofactor. In terms of processing, specific enzymatic cleavages by the viral protease yield mature proteins. The protease is released by autocatalytic cleavage. The polyprotein is cleaved during and after budding, this process is termed maturation. Proteolytic cleavage of p66 RT removes the RNase H domain to yield the p51 RT subunit. Nucleocapsid protein p7 might be further cleaved after virus entry. Post-translationally, tyrosine phosphorylated presumably in the virion by a host kinase. Phosphorylation is apparently not a major regulator of membrane association. Phosphorylated possibly by host MAPK1; this phosphorylation is necessary for Pin1-mediated virion uncoating. In terms of processing, methylated by host PRMT6, impairing its function by reducing RNA annealing and the initiation of reverse transcription.

Its subcellular location is the host cell membrane. The protein localises to the host endosome. It localises to the host multivesicular body. It is found in the virion membrane. The protein resides in the host nucleus. Its subcellular location is the host cytoplasm. The protein localises to the virion. The enzyme catalyses Specific for a P1 residue that is hydrophobic, and P1' variable, but often Pro.. The catalysed reaction is Endohydrolysis of RNA in RNA/DNA hybrids. Three different cleavage modes: 1. sequence-specific internal cleavage of RNA. Human immunodeficiency virus type 1 and Moloney murine leukemia virus enzymes prefer to cleave the RNA strand one nucleotide away from the RNA-DNA junction. 2. RNA 5'-end directed cleavage 13-19 nucleotides from the RNA end. 3. DNA 3'-end directed cleavage 15-20 nucleotides away from the primer terminus.. It catalyses the reaction 3'-end directed exonucleolytic cleavage of viral RNA-DNA hybrid.. It carries out the reaction DNA(n) + a 2'-deoxyribonucleoside 5'-triphosphate = DNA(n+1) + diphosphate. With respect to regulation, protease: The viral protease is inhibited by many synthetic protease inhibitors (PIs), such as amprenavir, atazanavir, indinavir, loprinavir, nelfinavir, ritonavir and saquinavir. Use of protease inhibitors in tritherapy regimens permit more ambitious therapeutic strategies. Reverse transcriptase/ribonuclease H: RT can be inhibited either by nucleoside RT inhibitors (NRTIs) or by non nucleoside RT inhibitors (NNRTIs). NRTIs act as chain terminators, whereas NNRTIs inhibit DNA polymerization by binding a small hydrophobic pocket near the RT active site and inducing an allosteric change in this region. Classical NRTIs are abacavir, adefovir (PMEA), didanosine (ddI), lamivudine (3TC), stavudine (d4T), tenofovir (PMPA), zalcitabine (ddC), and zidovudine (AZT). Classical NNRTIs are atevirdine (BHAP U-87201E), delavirdine, efavirenz (DMP-266), emivirine (I-EBU), and nevirapine (BI-RG-587). The tritherapies used as a basic effective treatment of AIDS associate two NRTIs and one NNRTI. Functionally, mediates, with Gag polyprotein, the essential events in virion assembly, including binding the plasma membrane, making the protein-protein interactions necessary to create spherical particles, recruiting the viral Env proteins, and packaging the genomic RNA via direct interactions with the RNA packaging sequence (Psi). Gag-Pol polyprotein may regulate its own translation, by the binding genomic RNA in the 5'-UTR. At low concentration, the polyprotein would promote translation, whereas at high concentration, the polyprotein would encapsidate genomic RNA and then shut off translation. In terms of biological role, targets the polyprotein to the plasma membrane via a multipartite membrane-binding signal, that includes its myristoylated N-terminus. Matrix protein is part of the pre-integration complex. Implicated in the release from host cell mediated by Vpu. Binds to RNA. Forms the conical core that encapsulates the genomic RNA-nucleocapsid complex in the virion. Most core are conical, with only 7% tubular. The core is constituted by capsid protein hexamer subunits. The core is disassembled soon after virion entry. Host restriction factors such as TRIM5-alpha or TRIMCyp bind retroviral capsids and cause premature capsid disassembly, leading to blocks in reverse transcription. Capsid restriction by TRIM5 is one of the factors which restricts HIV-1 to the human species. Host PIN1 apparently facilitates the virion uncoating. On the other hand, interactions with PDZD8 or CYPA stabilize the capsid. Its function is as follows. Encapsulates and protects viral dimeric unspliced genomic RNA (gRNA). Binds these RNAs through its zinc fingers. Acts as a nucleic acid chaperone which is involved in rearangement of nucleic acid secondary structure during gRNA retrotranscription. Also facilitates template switch leading to recombination. As part of the polyprotein, participates in gRNA dimerization, packaging, tRNA incorporation and virion assembly. Functionally, aspartyl protease that mediates proteolytic cleavages of Gag and Gag-Pol polyproteins during or shortly after the release of the virion from the plasma membrane. Cleavages take place as an ordered, step-wise cascade to yield mature proteins. This process is called maturation. Displays maximal activity during the budding process just prior to particle release from the cell. Also cleaves Nef and Vif, probably concomitantly with viral structural proteins on maturation of virus particles. Hydrolyzes host EIF4GI and PABP1 in order to shut off the capped cellular mRNA translation. The resulting inhibition of cellular protein synthesis serves to ensure maximal viral gene expression and to evade host immune response. Also mediates cleavage of host YTHDF3. Mediates cleavage of host CARD8, thereby activating the CARD8 inflammasome, leading to the clearance of latent HIV-1 in patient CD4(+) T-cells after viral reactivation; in contrast, HIV-1 can evade CARD8-sensing when its protease remains inactive in infected cells prior to viral budding. In terms of biological role, multifunctional enzyme that converts the viral RNA genome into dsDNA in the cytoplasm, shortly after virus entry into the cell. This enzyme displays a DNA polymerase activity that can copy either DNA or RNA templates, and a ribonuclease H (RNase H) activity that cleaves the RNA strand of RNA-DNA heteroduplexes in a partially processive 3' to 5' endonucleasic mode. Conversion of viral genomic RNA into dsDNA requires many steps. A tRNA(3)-Lys binds to the primer-binding site (PBS) situated at the 5'-end of the viral RNA. RT uses the 3' end of the tRNA primer to perform a short round of RNA-dependent minus-strand DNA synthesis. The reading proceeds through the U5 region and ends after the repeated (R) region which is present at both ends of viral RNA. The portion of the RNA-DNA heteroduplex is digested by the RNase H, resulting in a ssDNA product attached to the tRNA primer. This ssDNA/tRNA hybridizes with the identical R region situated at the 3' end of viral RNA. This template exchange, known as minus-strand DNA strong stop transfer, can be either intra- or intermolecular. RT uses the 3' end of this newly synthesized short ssDNA to perform the RNA-dependent minus-strand DNA synthesis of the whole template. RNase H digests the RNA template except for two polypurine tracts (PPTs) situated at the 5'-end and near the center of the genome. It is not clear if both polymerase and RNase H activities are simultaneous. RNase H probably can proceed both in a polymerase-dependent (RNA cut into small fragments by the same RT performing DNA synthesis) and a polymerase-independent mode (cleavage of remaining RNA fragments by free RTs). Secondly, RT performs DNA-directed plus-strand DNA synthesis using the PPTs that have not been removed by RNase H as primers. PPTs and tRNA primers are then removed by RNase H. The 3' and 5' ssDNA PBS regions hybridize to form a circular dsDNA intermediate. Strand displacement synthesis by RT to the PBS and PPT ends produces a blunt ended, linear dsDNA copy of the viral genome that includes long terminal repeats (LTRs) at both ends. Catalyzes viral DNA integration into the host chromosome, by performing a series of DNA cutting and joining reactions. This enzyme activity takes place after virion entry into a cell and reverse transcription of the RNA genome in dsDNA. The first step in the integration process is 3' processing. This step requires a complex comprising the viral genome, matrix protein, Vpr and integrase. This complex is called the pre-integration complex (PIC). The integrase protein removes 2 nucleotides from each 3' end of the viral DNA, leaving recessed CA OH's at the 3' ends. In the second step, the PIC enters cell nucleus. This process is mediated through integrase and Vpr proteins, and allows the virus to infect a non dividing cell. This ability to enter the nucleus is specific of lentiviruses, other retroviruses cannot and rely on cell division to access cell chromosomes. In the third step, termed strand transfer, the integrase protein joins the previously processed 3' ends to the 5' ends of strands of target cellular DNA at the site of integration. The 5'-ends are produced by integrase-catalyzed staggered cuts, 5 bp apart. A Y-shaped, gapped, recombination intermediate results, with the 5'-ends of the viral DNA strands and the 3' ends of target DNA strands remaining unjoined, flanking a gap of 5 bp. The last step is viral DNA integration into host chromosome. This involves host DNA repair synthesis in which the 5 bp gaps between the unjoined strands are filled in and then ligated. Since this process occurs at both cuts flanking the HIV genome, a 5 bp duplication of host DNA is produced at the ends of HIV-1 integration. Alternatively, Integrase may catalyze the excision of viral DNA just after strand transfer, this is termed disintegration. This chain is Gag-Pol polyprotein (gag-pol), found in Homo sapiens (Human).